We begin with the raw amino-acid sequence, 645 residues long: MAEAAAGEAGASERDPDAGRARRRLRVLSGHLLGRPQEAPSTNECKARRAASAAGASPAATPAAPESGTIPKKRQEVMKWNGWGYNDSKFLLNKKGQVELTGKRYPLSGLVLPTLRDWIQNTLGVSLEHKTTSKTSINPSEAPPSIVNEDFLQELKEARISYSQEADDRVFRAHGHCLHEIFLLREGMFERIPDIVVWPTCHDDVVKIVNLACKYNLCIIPIGGGTSVSYGLMCPADETRTIISLDTSQMNRILWVDENNLTAHVEAGITGQDLERQLKESGYCTGHEPDSLEFSTVGGWISTRASGMKKNIYGNIEDLVVHMKMVTPRGVIEKSSQGPRMSTGPDIHHFIMGSEGTLGVITEATIKIRPTPEYQKYGSVAFPNFEQGVACLREIAKQRCAPASIRLMDNQQFQFGHALKPQVSSIFTSFLDGLKKFYITKFKGFDPNQISVATLLFEGDREKVLQHEKQVYDIAAKFGGLAAGEDNGQRGYLLTYVIAYIRDLGLEYYVIGESFETSAPWDRVIDLCRNVKERIRRECKERGVQFAPLSTCRVTQTYDAGACIYFYFAFNYRGISDPLTVFEHTEAAAREEILANGGSLSHHHGVGKIRKQWLKESISDVGFGMLKSVKEYVDPSNIFGNRNLL.

Over residues 1–10 the composition is skewed to low complexity; that stretch reads MAEAAAGEAG. A peroxisome-targeting transit peptide spans 1–45; sequence MAEAAAGEAGASERDPDAGRARRRLRVLSGHLLGRPQEAPSTNEC. Residues 1 to 72 form a disordered region; it reads MAEAAAGEAG…AAPESGTIPK (72 aa). The segment covering 11 to 20 has biased composition (basic and acidic residues); that stretch reads ASERDPDAGR. Residues 50–69 are compositionally biased toward low complexity; sequence AASAAGASPAATPAAPESGT. S52 and S57 each carry phosphoserine. Phosphothreonine is present on T61. The residue at position 89 (K89) is an N6-acetyllysine. The 183-residue stretch at 189–371 folds into the FAD-binding PCMH-type domain; it reads FERIPDIVVW…TEATIKIRPT (183 aa). FAD contacts are provided by residues 221–227, 290–296, and 303–306; these read PIGGGTS, DSLEFST, and TRAS. K334 is subject to N6-acetyllysine. Residue 355-361 coordinates FAD; the sequence is EGTLGVI. R502 serves as a coordination point for substrate. Y565 (proton donor/acceptor) is an active-site residue. Important for enzyme activity stretches follow at residues 602–604 and 641–645; these read HHH and NRNLL.

It belongs to the FAD-binding oxidoreductase/transferase type 4 family. Homodimer. Requires FAD as cofactor.

The protein resides in the peroxisome membrane. The protein localises to the peroxisome. The catalysed reaction is a long chain fatty alcohol + a 1-acylglycerone 3-phosphate = a 1-O-alkylglycerone 3-phosphate + a long-chain fatty acid + H(+). It catalyses the reaction hexadecan-1-ol + 1-hexadecanoylglycerone 3-phosphate = 1-O-hexadecylglycerone 3-phosphate + hexadecanoate + H(+). It carries out the reaction 1-hexadecanoylglycerone 3-phosphate + a long-chain fatty acid = a 1-acylglycerone 3-phosphate + hexadecanoate. Its pathway is glycerolipid metabolism; ether lipid biosynthesis. Functionally, catalyzes the exchange of the acyl chain in acyl-dihydroxyacetonephosphate (acyl-DHAP) for a long chain fatty alcohol, yielding the first ether linked intermediate, i.e. alkyl-dihydroxyacetonephosphate (alkyl-DHAP), in the pathway of ether lipid biosynthesis. The sequence is that of Alkyldihydroxyacetonephosphate synthase, peroxisomal (Agps) from Mus musculus (Mouse).